The following is a 389-amino-acid chain: Na(+)/H(+) antiporter NhaA (389 aa).

Helical transmembrane passes span 14–34 (AGGI…NSPL), 59–79 (LILW…GLEV), 95–115 (SLPT…YLLF), 124–144 (AGWA…MALL), 154–174 (VFLL…IALF), 177–197 (TDLS…LVGL), 213–233 (LILW…GVII), 257–277 (PWST…VYVG), 292–312 (IALG…YIAV), 328–348 (IAPV…IASL), and 363–383 (LGTL…LSKV).

Belongs to the NhaA Na(+)/H(+) (TC 2.A.33) antiporter family.

Its subcellular location is the cell inner membrane. It carries out the reaction Na(+)(in) + 2 H(+)(out) = Na(+)(out) + 2 H(+)(in). In terms of biological role, na(+)/H(+) antiporter that extrudes sodium in exchange for external protons. The chain is Na(+)/H(+) antiporter NhaA from Shewanella baltica (strain OS223).